The chain runs to 378 residues: D-alanine--D-alanine ligase (378 aa).

An ATP-grasp domain is found at 140 to 346 (KKIISQAGIR…YSDLIDRLIQ (207 aa)). Residue 170–225 (EEKLGNLTFVKPAKQGSSVGIHRVTNAEEYEKALDDAFKYDYKILVEQGIANPQEI) participates in ATP binding. Residues Asp300, Glu313, and Asn315 each coordinate Mg(2+).

This sequence belongs to the D-alanine--D-alanine ligase family. Mg(2+) is required as a cofactor. Requires Mn(2+) as cofactor.

The protein localises to the cytoplasm. It catalyses the reaction 2 D-alanine + ATP = D-alanyl-D-alanine + ADP + phosphate + H(+). Its pathway is cell wall biogenesis; peptidoglycan biosynthesis. Its function is as follows. Cell wall formation. In Limosilactobacillus reuteri (strain DSM 20016) (Lactobacillus reuteri), this protein is D-alanine--D-alanine ligase.